We begin with the raw amino-acid sequence, 506 residues long: ATP synthase subunit alpha (506 aa).

Residue 171–178 participates in ATP binding; that stretch reads GDRQTGKT.

The protein belongs to the ATPase alpha/beta chains family. F-type ATPases have 2 components, CF(1) - the catalytic core - and CF(0) - the membrane proton channel. CF(1) has five subunits: alpha(3), beta(3), gamma(1), delta(1), epsilon(1). CF(0) has four main subunits: a(1), b(1), b'(1) and c(9-12).

It localises to the cellular thylakoid membrane. The enzyme catalyses ATP + H2O + 4 H(+)(in) = ADP + phosphate + 5 H(+)(out). Produces ATP from ADP in the presence of a proton gradient across the membrane. The alpha chain is a regulatory subunit. The polypeptide is ATP synthase subunit alpha (Nostoc sp. (strain PCC 7120 / SAG 25.82 / UTEX 2576)).